The primary structure comprises 420 residues: Dachshund homolog dac-1 (420 aa).

The segment at 23 to 77 (PSSSSSSSNNSSSNTSSSNFLSPYEYQESSTSPRDTTDSSGESSLSSSGSSSSLN) is disordered. Composition is skewed to low complexity over residues 24-41 (SSSS…SSSN) and 51-77 (SSTS…SSLN). The segment at 85–171 (KLIKFRGHNV…LLKTSDFEKL (87 aa)) is DACHbox-N. A compositionally biased stretch (basic and acidic residues) spans 242–258 (NSFERADDDDQNQRDAD). Positions 242 to 321 (NSFERADDDD…SSSSSGKNDE (80 aa)) are disordered. Polar residues predominate over residues 263–273 (LNLSKSGGNSE). The segment covering 297 to 317 (GGSNSNSLSMSMEAGSSSSSG) has biased composition (low complexity).

It belongs to the DACH/dachshund family. In terms of tissue distribution, expressed in AFD, AWC, ASE and ASK neurons. Expressed in the alae.

It is found in the nucleus. Its function is as follows. Transcription factor. Plays a role in the thermotactic response. In Caenorhabditis elegans, this protein is Dachshund homolog dac-1.